The following is a 51-amino-acid chain: Small ribosomal subunit protein uS14 (51 aa).

Residues C16, C19, C34, and C37 each coordinate Zn(2+).

Belongs to the universal ribosomal protein uS14 family. Zinc-binding uS14 subfamily. Part of the 30S ribosomal subunit. It depends on Zn(2+) as a cofactor.

Binds 16S rRNA, required for the assembly of 30S particles. The polypeptide is Small ribosomal subunit protein uS14 (Archaeoglobus fulgidus (strain ATCC 49558 / DSM 4304 / JCM 9628 / NBRC 100126 / VC-16)).